The primary structure comprises 233 residues: Large ribosomal subunit protein uL1 (233 aa).

This sequence belongs to the universal ribosomal protein uL1 family. Part of the 50S ribosomal subunit.

Functionally, binds directly to 23S rRNA. The L1 stalk is quite mobile in the ribosome, and is involved in E site tRNA release. In terms of biological role, protein L1 is also a translational repressor protein, it controls the translation of the L11 operon by binding to its mRNA. The sequence is that of Large ribosomal subunit protein uL1 from Shewanella woodyi (strain ATCC 51908 / MS32).